The chain runs to 369 residues: Extracellular signal-regulated kinase 2 (369 aa).

One can recognise a Protein kinase domain in the interval 14-304; it reads YEVLQKIGKG…AEEALAHPFV (291 aa). Residues 20–28 and K43 each bind ATP; that span reads IGKGAYGIV. The active-site Proton acceptor is the D137. T176 is subject to Phosphothreonine. The TXY motif lies at 176–178; the sequence is TEY. Y178 carries the phosphotyrosine modification. The segment at 346–369 is disordered; it reads KKKEERKKQTNPTKPDTTAPTLST. A compositionally biased stretch (polar residues) spans 355–369; it reads TNPTKPDTTAPTLST.

It belongs to the protein kinase superfamily. CMGC Ser/Thr protein kinase family. MAP kinase subfamily. Requires Mg(2+) as cofactor. Post-translationally, dually phosphorylated on Thr-176 and Tyr-178, which activates the enzyme.

It carries out the reaction L-seryl-[protein] + ATP = O-phospho-L-seryl-[protein] + ADP + H(+). The catalysed reaction is L-threonyl-[protein] + ATP = O-phospho-L-threonyl-[protein] + ADP + H(+). With respect to regulation, activated by tyrosine and threonine phosphorylation. Its function is as follows. Implicated in the relay of the cAMP chemotactic signal and cell differentiation. Important for receptor-mediated activation of adenylyl cyclase. In Dictyostelium discoideum (Social amoeba), this protein is Extracellular signal-regulated kinase 2 (erkB).